A 259-amino-acid chain; its full sequence is Protein FAM220A (259 aa).

The tract at residues 29–66 (GLKRRSEKRNPSPSDVPSWTDQPVADTHGKSRAMAAAS) is disordered. Positions 39 to 49 (PSPSDVPSWTD) are enriched in polar residues.

Interacts with transcriptional activator STAT3; the interaction occurs in both the nucleus and the cytoplasm, is enhanced by IL6 and promotes STAT3 dephosphorylation, leading to negative regulation of STAT3 transcriptional activator activity. Can interact with both unphosphorylated and phosphorylated STAT3 but interacts preferentially with phosphorylated STAT3 in the nucleus. Interacts with protein phosphatase PTPN2/TC45; this promotes interaction of PTPN2 with STAT3, leading to dephosphorylation of STAT3 by PTPN2.

It localises to the nucleus. Its subcellular location is the cytoplasm. The protein localises to the cytoplasmic vesicle. It is found in the secretory vesicle. The protein resides in the acrosome. In terms of biological role, promotes dephosphorylation of transcriptional activator STAT3 by interacting with both STAT3 and protein phosphatase PTPN2. This promotes interaction of PTPN2 with STAT3 and mediates STAT3 dephosphorylation by PTPN2, leading to negative regulation of STAT3 transcriptional activator activity. May be required for spermiogenesis or sperm function. This Rattus norvegicus (Rat) protein is Protein FAM220A (Fam220a).